The chain runs to 24 residues: Carboxypeptidase 1 (24 aa).

Residues N3 and N11 are each glycosylated (N-linked (GlcNAc...) asparagine).

This sequence belongs to the peptidase S10 family. As to quaternary structure, monomer. Post-translationally, contains both N- and O-linked sugar chains. The N-linked oligosaccharides are unique structures of Man(10)GlcNAc(2) and Man(11)GlcNAc(2). Deglycosylation does neither affect catalytic activity, pH, thermal stability, or resistance to proteolysis of the enzyme.

The protein localises to the secreted. Inhibited by DFP. Functionally, removes acidic, neutral and basic amino acids as well as proline from the C-terminal position. Digests preferentially peptides containing a hydrophobic residue in P1' position, as well as arginine, lysine or phenylalanine in P1 position of ester substrate. Catalyzes also peptide synthesis. This is Carboxypeptidase 1 from Aspergillus niger.